The primary structure comprises 129 residues: Procyclic form-specific polypeptide A-beta (129 aa).

The N-terminal stretch at 1 to 27 is a signal peptide; the sequence is MAPRSLYLLAVLLFSANLFAGVGFAAA. A disordered region spans residues 27–111; sequence AAEGPEDKGL…PEPEPGAATL (85 aa). The span at 53 to 104 shows a compositional bias: acidic residues; the sequence is DDTNGTDPDPEPEPEPEPEPEPEPEPEPEPEPEPEPEPEPEPEPEPEPEPEP. Asn-56 carries N-linked (GlcNAc...) asparagine glycosylation. A run of 24 repeats spans residues 59–60, 61–62, 63–64, 65–66, 67–68, 69–70, 71–72, 73–74, 75–76, 77–78, 79–80, 81–82, 83–84, 85–86, 87–88, 89–90, 91–92, 93–94, 95–96, 97–98, 99–100, 101–102, 103–104, and 105–106. The 24 X 2 AA tandem repeats of [DE]-P stretch occupies residues 59–106; it reads DPDPEPEPEPEPEPEPEPEPEPEPEPEPEPEPEPEPEPEPEPEPEPEP. Gly-107 carries the GPI-anchor amidated glycine lipid modification. Positions 108 to 129 are excised as a propeptide; that stretch reads AATLKSVALPFAIAAVGLVAAF.

The protein resides in the cell membrane. In terms of biological role, major surface antigen of procyclic forms. The chain is Procyclic form-specific polypeptide A-beta (PARPA-BETA) from Trypanosoma brucei brucei.